The chain runs to 286 residues: Translocon-associated protein subunit alpha (286 aa).

Positions M1–L21 are cleaved as a signal peptide. Over R22–T207 the chain is Lumenal. A compositionally biased stretch (acidic residues) spans I46–S75. The segment at I46–A83 is disordered. N136 and N191 each carry an N-linked (GlcNAc...) asparagine glycan. A helical transmembrane segment spans residues I208 to L228. Over L229–E286 the chain is Cytoplasmic. Residues R236–E286 form a disordered region. A compositionally biased stretch (polar residues) spans G244 to K266. Position 247 is a phosphoserine (S247). Phosphothreonine is present on T260. Position 268 is a phosphoserine (S268). Over residues S268–K279 the composition is skewed to basic residues.

The protein belongs to the TRAP-alpha family. As to quaternary structure, heterotetramer of TRAP-alpha, TRAP-beta, TRAP-delta and TRAP-gamma. Interacts with palmitoylated calnexin (CALX), the interaction is required for efficient folding of glycosylated proteins.

The protein localises to the endoplasmic reticulum membrane. TRAP proteins are part of a complex whose function is to bind calcium to the ER membrane and thereby regulate the retention of ER resident proteins. May be involved in the recycling of the translocation apparatus after completion of the translocation process or may function as a membrane-bound chaperone facilitating folding of translocated proteins. This is Translocon-associated protein subunit alpha (Ssr1) from Mus musculus (Mouse).